Consider the following 123-residue polypeptide: MPKSVMIVEDNELNMKLFRDLIEASGYETIRTRNGLEALDLAREHRPDLILMDIQLPEVSGLEVTKWLKDDDELRHIPVIAVTAFAMKGDEERIRQGGCEAYISKPISVPRFIETIKSYLGDA.

The Response regulatory domain occupies 4–120 (SVMIVEDNEL…RFIETIKSYL (117 aa)). 4-aspartylphosphate is present on aspartate 53.

As to quaternary structure, interacts with DivL, PleC, DivJ and PdhS.

It is found in the cytoplasm. In terms of biological role, essential protein that is involved in the control of cell division, probably through the regulation of ctrA. Its phosphorylation status is regulated by PdhS. The polypeptide is Polar-differentiation response regulator DivK (divK) (Brucella anthropi (strain ATCC 49188 / DSM 6882 / CCUG 24695 / JCM 21032 / LMG 3331 / NBRC 15819 / NCTC 12168 / Alc 37) (Ochrobactrum anthropi)).